A 122-amino-acid polypeptide reads, in one-letter code: Double-headed protease inhibitor, submandibular gland (122 aa).

2 Kazal-like domains span residues 10–70 and 71–121; these read GGRK…KCDI and ECPQ…QCQS. 6 disulfide bridges follow: C16–C50, C28–C47, C36–C68, C72–C101, C79–C98, and C87–C119.

It is found in the secreted. Functionally, this inhibitor is composed of two homologous actively inhibiting halves: one which inhibits trypsin, the other which inhibits elastase. This is Double-headed protease inhibitor, submandibular gland from Mustela lutreola (European mink).